The chain runs to 876 residues: MNPFSSGTRLRDMIRAIRACKTAAEERAVVRKECADIRALINEDDPHDRHRNLAKLMFIHMLGYPTHFGQMECLKLIASPGFPEKRIGYLGLMLLLDERQEVLMLVTNSLKQDLNHSNQYVVGLALCALGNICSAEMARDLAPEVERLIQFRDPNIRKKAALCSTRIIRKVPDLAENFVNAAASLLKEKHHGVLITGVQLCYELCTINDEALEYFRTKCTEGLIKTLRDITNSAYQPEYDVAGITDPFLHIRLLRLLRVLGQGDADASDLMTDILAQVATKTESNKNAGNAVLYECVETIMAIEDTNSLRVLAINILGRFLSNRDNNIRYVALNMLMKAITFDDQAVQRHRVTILECVKDPDASIRKRALELVTLLVNENNVTQLTKELIDYLEISDEDFKEDLSAKICFIVEKFSPEKLWYIDQMLKVLCEAGKFVKDDVWHALIVVISNASELHGYTVRALYKSVLTYSEQETLVRVAVWCIGEYGDLLVNNVGMLGIEDPITVTESDAVDVIEDAITRHNSDSTTKAMALVALLKLSSRFPSISERIKDIIVKQKGSLLLEMQQRAIEYNSIVDRHKNIRSSLVDRMPVLDEATFNVRRAGSFPASVSTMAKPSVSLQNGVEKLPVAPLVDLLDLDSDDIMAAPSPSGTDFLQDLLGVDLGSSSAQYGATQAPKAGTDLLLDILSIGTPSPAQNSTSSIGLLSIADVNNNPSIALDTLSSPAPPHVATTSSTGMFDLLDGLSPSPSKEATNGPAYAPIVAYESSSLKIEFTFSKTPGNLQTTNVQATFTNLSPNTFTDFIFQAAVPKFLQLHLDPASSNTLLASGSGAITQNLRVTNSQQGKKSLVMRMRIGYKLNGKDVLEEGQVSNFPRGL.

HEAT repeat units lie at residues 97-135, 136-173, 248-284, 308-345, 346-382, 384-417, 418-454, 506-545, and 560-599; these read DERQ…ICSA, EMAR…KVPD, FLHI…KTES, SLRV…FDDQ, AVQR…ENNV, QLTK…KFSP, EKLW…NASE, VTES…RFPS, and SLLL…ATFN. The 118-residue stretch at 756–873 folds into the GAE domain; sequence PAYAPIVAYE…LEEGQVSNFP (118 aa).

This sequence belongs to the adaptor complexes large subunit family. As to quaternary structure, adaptor protein complex 1 (AP-1) is a heterotetramer composed of two large adaptins (gamma-type subunit and beta-type subunit), a medium adaptin (mu-type subunit) and a small adaptin (sigma-type subunit). Binds to EPSIN1. Interacts with DRP2A/ADL6 (via C-terminus).

It localises to the golgi apparatus. It is found in the cytoplasmic vesicle. Its subcellular location is the clathrin-coated vesicle membrane. Subunit of clathrin-associated adaptor protein complex 1 that plays a role in protein sorting at the trans-Golgi network and early endosomes (TGN/EE). The AP complexes mediate both the recruitment of clathrin to membranes and the recognition of sorting signals within the cytosolic tails of transmembrane cargo molecules. The polypeptide is AP-1 complex subunit gamma-1 (GAMMA-ADR) (Arabidopsis thaliana (Mouse-ear cress)).